Here is a 464-residue protein sequence, read N- to C-terminus: 3-deoxy-D-manno-octulosonic acid transferase (464 aa).

A helical; Signal-anchor transmembrane segment spans residues 2–22 (MLLYYALSFILLPVYFIIILI). In terms of domain architecture, RPE1 insert spans 47–93 (DSLDFMQTSANKEEFKGDTSLRTTTYTLIREDEGLGSTYKLPLEASD). Glutamate 107 (proton acceptor) is an active-site residue. Residues 311 to 312 (PR), 352 to 354 (FGE), and 377 to 380 (NILE) contribute to the CMP site.

The protein belongs to the glycosyltransferase group 1 family. Glycosyltransferase 30 subfamily.

Its subcellular location is the cell inner membrane. The enzyme catalyses lipid IVA (E. coli) + CMP-3-deoxy-beta-D-manno-octulosonate = alpha-Kdo-(2-&gt;6)-lipid IVA (E. coli) + CMP + H(+). The protein operates within bacterial outer membrane biogenesis; LPS core biosynthesis. In terms of biological role, involved in lipopolysaccharide (LPS) biosynthesis. Catalyzes the transfer of 3-deoxy-D-manno-octulosonate (Kdo) residue(s) from CMP-Kdo to lipid IV(A), the tetraacyldisaccharide-1,4'-bisphosphate precursor of lipid A. The polypeptide is 3-deoxy-D-manno-octulosonic acid transferase (waaA) (Rickettsia conorii (strain ATCC VR-613 / Malish 7)).